The sequence spans 415 residues: Multidrug resistance protein MdtA (415 aa).

Residues 1-21 (MKGSYKSRWVIVIVVVIAAIA) form the signal peptide. Disordered regions lie at residues 32-56 (SRSAAPGATKQAQQSPAGGRRGMRA) and 392-415 (EAQSATTSEEKATSREYAKKGARS). The span at 399 to 415 (SEEKATSREYAKKGARS) shows a compositional bias: basic and acidic residues.

It belongs to the membrane fusion protein (MFP) (TC 8.A.1) family. As to quaternary structure, part of a tripartite efflux system composed of MdtA, MdtB and MdtC.

Its subcellular location is the cell inner membrane. The MdtABC tripartite complex confers resistance against novobiocin and deoxycholate. The polypeptide is Multidrug resistance protein MdtA (Escherichia coli O7:K1 (strain IAI39 / ExPEC)).